A 116-amino-acid polypeptide reads, in one-letter code: Large ribosomal subunit protein bL19 (116 aa).

Belongs to the bacterial ribosomal protein bL19 family.

Its function is as follows. This protein is located at the 30S-50S ribosomal subunit interface and may play a role in the structure and function of the aminoacyl-tRNA binding site. In Actinobacillus succinogenes (strain ATCC 55618 / DSM 22257 / CCUG 43843 / 130Z), this protein is Large ribosomal subunit protein bL19.